Consider the following 74-residue polypeptide: DNA-directed RNA polymerase subunit omega (74 aa).

Belongs to the RNA polymerase subunit omega family. The RNAP catalytic core consists of 2 alpha, 1 beta, 1 beta' and 1 omega subunit. When a sigma factor is associated with the core the holoenzyme is formed, which can initiate transcription.

The enzyme catalyses RNA(n) + a ribonucleoside 5'-triphosphate = RNA(n+1) + diphosphate. In terms of biological role, promotes RNA polymerase assembly. Latches the N- and C-terminal regions of the beta' subunit thereby facilitating its interaction with the beta and alpha subunits. This Hydrogenovibrio crunogenus (strain DSM 25203 / XCL-2) (Thiomicrospira crunogena) protein is DNA-directed RNA polymerase subunit omega.